The chain runs to 2731 residues: MEQTDCKPYQPLSKVKHEMDLAYTSSSDESEDGRKPRQSFNSRETLHEYNQELRRNYNSQSRKRKDVEKSTQEIEFCETPPTLCSGYHTDMHSVSRHGYQLEMGSDVDTETEGAASPDHALRMWIRGMKSEHSSCLSSRANSALSLTDTDHERKSDGENGFKFSPVCCDMEAPADSAQDMQSSPHNQFTFRPLPPPPPPPHACTCARKPPPTVDSLQRRSMTTRSQPSPAAPAPPTSTQDSVHLHNSWVLNSNIPLETRHFLFKHGSGSSAIFSAASQNYPLTSNTVYSPPPRPLPRSTFSRPAFTFNKPYRCCNWKCTALSATAITVTLALLLAYVIAVHLFGLTWQLQPVGQIYANGISNGNPGTESMDTTYSPIGGRVSDKSEKKVFQKGRAIDTGEVDIGAQVMQTIPPGLFWRFQITIHHPIYLKFNISLAKDSLLGIYGRRNIPPTHTQFDFVKLMDGKQLVKQDSKSSDDIQHSPRNLILTSLQETGFIEYMDQGPWYLAFYNDGKKMEQVFVLTTAIEIMDDCSTNCNGNGECISGHCHCFPGFLGPDCARDSCPVLCGGNGEYEKGHCVCRNGWKGPECDVPEEQCIDPTCFGHGTCIMGVCICVPGYKGEICEEEDCLDPMCSSHGICVKGECHCSTGWGGVNCETPLPICQEQCSGHGTFLLDTGVCSCDPKWTGSDCSTELCTMECGSHGVCSRGICQCEEGWVGPTCEERSCHSHCAEHGQCKDGKCECSPGWEGDHCTIAHYLDAVRDGCPGLCFGNGRCTLDQNGWHCVCQVGWSGTGCNIVMEMLCGDNLDNDGDGLTDCVDPDCCQQSNCYVSPLCQGSPDPLDLIQQSQPLFSQHTSRLFYDRIKFLIGKDSTHVVPQDISFDSRRACVIRGQVVAVDGTPLVGVNVSFLHHSDYGFTISRQDGSFDLVAIGGISVVLIFDRSPFLSEKRTLWLPWNQFIVVEKVIMQRIVADAPSCDISNFISPNPIVLPSPLTSFGGSCPERGTIVPELQVVQEEIPIPSSFVRLSYLSSRTPGYKTLLRILLTHSTIPVGMIKVHLTVSVEGRLTQKWFPAAINLVYTFAWNKTDIYGQKVWGLAEALVSVGYEYEMCPEFILWEQRTVVLQGFEMDASNLGGWSLNKHHIFNPQSGIIHKGNGENMFISQQPPVIATIMGNGHQRSVACTNCNGPAHNNKLFAPVALASGPDGSVYVGDFNFVRRIFPSGNSVSILELRNRDTRHSTSPAHKYYLAMDPMSESLYLSDTNTRKVYKLKSLVETKDLSKNFEVVAGTGDQCLPFDQSHCGDGGKASEASLNSPRGITVDRHGFIYFVDGTMIRRIDENAVITTVIGSNGLTSTQPLSCDSGMDITQVRLEWPTDLAVNPMDNSLYVLDNNIVLQISENRRVRIIAGRPIHCQVPGIDHFLVSKVAIHSTLESARAISVSHSGLLFIAETDERKVNRIQQVTTNGEISIIAGAPTDCDCKIDPNCDCFSGDGGYAKDAKMKAPSSLAVSPDGTLYVADLGNVRIRTISKNQAHLNDMNLYEIASPADQELYQFTVNGTHLHTMNLITRDYVYNFTYNAEGDLGAITSSNGNSVHIRRDAGGMPLWLVVPGGQVYWLTISSNGVLKRVSAQGYNLALMTYPGNTGLLATKSNENGWTTVYEYDPEGHLTNATFPTGEVSSFHSDLEKLTKVALDTSNRENVLMSTNLTATSTIYILKQENTQSTYRVSPDGSLRVTFASGMEINLSSEPHILAGAVNPTLGKCNISLPGEHNANLIEWRQRKEQNKGNVSAFERRLRAHNRNLLSIDFDHMTRTGKIYDDHRKFTLRILYDQTGRPILWSPVSRYNEVNITYSPSGLVTFIQRGTWNEKMEYDQSGKIISRTWADGKIWSYTYLEKSVMLLLHSQRRYIFEYDQSDCLLSVTMPSMVRHSLQTMLSVGYYRNIYTPPDSSTSFIQDYSRDGRLLQTLHLGTGRRVLYKYTKQARLSEILYDTTQVTLTYEESSGVIKTIHLMHDGFICTIRYRQTGPLIGRQIFRFSEEGLVNARFDYSYNNFRVTSMQAVINETPLPIDLYRYVDVSGRTEQFGKFSVINYDLNQVITTTVMKHTKIFNANGQVIEVQYEILKAIAYWMTIQYDNMGRMVICDIRVGVDANITRYFYEYDADGQLQTVSVNDKIQWRYSYDLNGNINLLSHGNSARLTPLRYDLRDRITRLGEIQYKMDEDGFLRQRGNDIFEYNSNGLLQKAYNKVSGWTVQYYYDGLGRRVASKSSLGQHLQFFYADLANPIRVTHLYNHTSAEITSLYYDLQGHLIAMELSSGEEYYVACDNMGTPLAVFSSRGQVIKEILYTPYGDIYHDTYPDFEVIIGFHGGLYDFLTKLVHLGQRDYDVVAGRWTTPNHHIWKQLNLLPKPFNLYSFENNYPVGKIQDVAKYTTDIGTWLELFGFQLHNVLPGFPKPELENMELTYELLQLQTKTQEWDPGKMILGIQCELQKQLRNFISLDQLPMTPQYNEGRCLEGGKQPRFAAVPSVFGKGIKFAIKEGIVTADIIGVANEDSRRLAAILNNAHYLENLHFTIEGRDTHYFIKLGSLEEDLVLIGNTGGRRILENGVNVTVSQMTSVLNGRTRRFADIQLQHGALCFNIRYGTTVEEEKNHVLEMARQRAVAQAWTQEQRRLQEGEEGTRVWTEGEKQQLLGTGRVQGYDGYFVLSVEQYLELSDSANNIHFMRQSEIGRR.

Residues 1 to 72 are disordered; that stretch reads MEQTDCKPYQ…KRKDVEKSTQ (72 aa). One can recognise a Teneurin N-terminal domain in the interval 1–318; that stretch reads MEQTDCKPYQ…KPYRCCNWKC (318 aa). The Cytoplasmic portion of the chain corresponds to 1 to 324; sequence MEQTDCKPYQ…NWKCTALSAT (324 aa). A compositionally biased stretch (basic and acidic residues) spans 44 to 55; it reads ETLHEYNQELRR. A Nuclear localization signal (NLS) motif is present at residues 62-65; sequence RKRK. The residue at position 105 (Ser105) is a Phosphoserine. Phosphothreonine is present on Thr109. The residue at position 116 (Ser116) is a Phosphoserine. The tract at residues 175–241 is disordered; it reads DSAQDMQSSP…PAPPTSTQDS (67 aa). The span at 178–189 shows a compositional bias: polar residues; sequence QDMQSSPHNQFT. Residues 192–201 show a composition bias toward pro residues; the sequence is PLPPPPPPPH. The span at 214–224 shows a compositional bias: polar residues; sequence DSLQRRSMTTR. The Required for interaction with SORBS1 (Ten-1 ICD form) motif lies at 290-297; it reads PPPRPLPR. The helical transmembrane segment at 325–345 threads the bilayer; the sequence is AITVTLALLLAYVIAVHLFGL. Residues 346–2731 are Extracellular-facing; that stretch reads TWQLQPVGQI…FMRQSEIGRR (2386 aa). Residue Asn432 is glycosylated (N-linked (GlcNAc...) asparagine). EGF-like domains are found at residues 527-558, 559-590, 591-623, 624-656, 657-690, 691-720, 721-752, and 760-795; these read IMDD…PDCA, RDSC…ECDV, PEEQ…EICE, EEDC…NCET, PLPI…SDCS, TELC…GPTC, EERS…DHCT, and VRDG…TGCN. Disulfide bonds link Cys531–Cys541, Cys535–Cys546, Cys548–Cys557, Cys566–Cys577, Cys579–Cys588, Cys595–Cys606, Cys600–Cys611, Cys613–Cys622, Cys627–Cys638, Cys632–Cys643, Cys645–Cys654, Cys665–Cys678, Cys680–Cys689, Cys694–Cys704, Cys698–Cys709, Cys711–Cys720, Cys725–Cys735, Cys729–Cys740, Cys742–Cys751, Cys764–Cys774, Cys768–Cys783, and Cys785–Cys794. Asn904 and Asn1083 each carry an N-linked (GlcNAc...) asparagine glycan. NHL repeat units lie at residues 1193–1218, 1298–1342, 1357–1408, 1420–1464, and 1487–1530; these read LFAP…VRRI, SHCG…NAVI, LSCD…IAGR, FLVS…VTTN, and CFSG…ISKN. The YD 1 repeat unit spans residues 1540 to 1559; the sequence is YEIASPADQELYQFTVNGTH. N-linked (GlcNAc...) asparagine glycans are attached at residues Asn1556 and Asn1573. 4 YD repeats span residues 1576–1596, 1614–1638, 1639–1660, and 1661–1681; these read YNAE…VHIR, YWLT…ALMT, YPGN…TVYE, and YDPE…SSFH. N-linked (GlcNAc...) asparagine glycans are attached at residues Asn1669, Asn1705, Asn1743, Asn1763, Asn1787, and Asn1848. 11 YD repeats span residues 1851 to 1870, 1871 to 1891, 1892 to 1910, 1911 to 1931, 1939 to 1955, 1956 to 1975, 1976 to 1995, 1998 to 2018, 2021 to 2041, 2091 to 2111, and 2119 to 2139; these read YSPS…EKME, YDQS…WSYT, YLEK…YIFE, YDQS…HSLQ, YRNI…FIQD, YSRD…RRVL, YKYT…TQVT, YEES…FICT, YRQT…EGLV, YDLN…FNAN, and YEIL…MGRM. N-linked (GlcNAc...) asparagine glycosylation occurs at Asn2151. YD repeat units lie at residues 2159 to 2179, 2180 to 2200, 2202 to 2222, 2234 to 2254, and 2256 to 2276; these read YDAD…WRYS, YDLN…LTPL, YDLR…DEDG, YNSN…TVQY, and YDGL…LQFF. A glycan (N-linked (GlcNAc...) asparagine) is linked at Asn2291. 2 YD repeats span residues 2302 to 2319 and 2320 to 2343; these read YDLQ…GEEY and YVAC…IKEI. At Ser2586 the chain carries Phosphoserine. A glycan (N-linked (GlcNAc...) asparagine) is linked at Asn2608.

This sequence belongs to the tenascin family. Teneurin subfamily. As to quaternary structure, homodimer; disulfide-linked. Heterodimer with either TENM2 or TENM3. May also form heterodimer with TENM4. Ten-1 ICD interacts with SORBS1 (via third SH3 domain). Interacts with MBD1 isoform 2. Ten-1 ICD interacts with HINT1. Once secreted, may also be cleaved to give rise to the TCAP-1 form. Post-translationally, derives from the plasma membrane form by proteolytic processing. Further proteolytic cleavage may generate 11.9 and 4.7 kDa bioactive peptides. As to expression, isoform 1 and isoform 2 are expressed in the brain. Isoform 2 is expressed in the granular layer of the dentate gyrus and the pyramidal layer (Py) of the CA1, CA2 and CA3 of the hippocampus (at protein level). Expressed in the cortex, thalamus, CA1, CA2, CA3, dentate gyrus and granular layer of the hippocampus. Weakly expressed in kidney, testis and lung.

The protein localises to the cell membrane. It is found in the cytoplasm. It localises to the secreted. The protein resides in the nucleus. Its subcellular location is the nucleus speckle. The protein localises to the nucleus matrix. It is found in the cytoskeleton. Involved in neural development, regulating the establishment of proper connectivity within the nervous system. May function as a cellular signal transducer. Its function is as follows. Plays a role in the regulation of neuroplasticity in the limbic system. Mediates a rapid reorganization of actin- and tubulin-based cytoskeleton elements with an increase in dendritic arborization and spine density formation of neurons in the hippocampus and amygdala. Induces BDNF transcription inhibition in neurons. Activates the mitogen-activated protein (MAP) kinase 2 (MEK2) and extracellular signal-regulated kinase (ERK) cascade. Also acts as a bioactive neuroprotective peptide on limbic neurons of the brain and regulates stress-induced behavior: attenuates alkalosis-associated necrotic cell death and the effects of corticotropin-releasing factor (CRF) on c-fos/FOS induction and on the reinstatement of cocaine seeking. In terms of biological role, induces gene transcription activation. The protein is Teneurin-1 (Tenm1) of Mus musculus (Mouse).